Consider the following 238-residue polypeptide: Opacity protein opA68 (238 aa).

Ala1 is a signal peptide. The interval 88-109 is disordered; sequence NLQRRTSNGNRRDRKTENQENG.

Belongs to the opacity porin family.

Its subcellular location is the cell outer membrane. Implicated in a number of adherence functions. OPA proteins are implicated in pathogenesis and are subject to phase variation. The sequence is that of Opacity protein opA68 from Neisseria gonorrhoeae.